We begin with the raw amino-acid sequence, 401 residues long: Dual-specificity RNA methyltransferase RlmN (401 aa).

Residue Glu-114 is the Proton acceptor of the active site. The Radical SAM core domain maps to 120 to 365 (DKGRGTLCVS…TMVRRTRGDD (246 aa)). Cys-127 and Cys-370 are joined by a disulfide. Residues Cys-134, Cys-138, and Cys-141 each coordinate [4Fe-4S] cluster. Residues 187–188 (GE), Ser-219, 241–243 (SLH), and Asn-327 contribute to the S-adenosyl-L-methionine site. Residue Cys-370 is the S-methylcysteine intermediate of the active site.

The protein belongs to the radical SAM superfamily. RlmN family. It depends on [4Fe-4S] cluster as a cofactor.

The protein resides in the cytoplasm. The enzyme catalyses adenosine(2503) in 23S rRNA + 2 reduced [2Fe-2S]-[ferredoxin] + 2 S-adenosyl-L-methionine = 2-methyladenosine(2503) in 23S rRNA + 5'-deoxyadenosine + L-methionine + 2 oxidized [2Fe-2S]-[ferredoxin] + S-adenosyl-L-homocysteine. The catalysed reaction is adenosine(37) in tRNA + 2 reduced [2Fe-2S]-[ferredoxin] + 2 S-adenosyl-L-methionine = 2-methyladenosine(37) in tRNA + 5'-deoxyadenosine + L-methionine + 2 oxidized [2Fe-2S]-[ferredoxin] + S-adenosyl-L-homocysteine. Functionally, specifically methylates position 2 of adenine 2503 in 23S rRNA and position 2 of adenine 37 in tRNAs. m2A2503 modification seems to play a crucial role in the proofreading step occurring at the peptidyl transferase center and thus would serve to optimize ribosomal fidelity. This Xanthomonas axonopodis pv. citri (strain 306) protein is Dual-specificity RNA methyltransferase RlmN.